A 301-amino-acid chain; its full sequence is uncharacterized protein (301 aa).

The active-site Charge relay system is Thr47. The active-site Proton donor is Tyr136. Lys165 serves as the catalytic Schiff-base intermediate with substrate.

Belongs to the DapA family. In terms of assembly, homotetramer.

It localises to the cytoplasm. This is an uncharacterized protein from Thermofilum pendens (strain DSM 2475 / Hrk 5).